We begin with the raw amino-acid sequence, 188 residues long: Elongation factor P (188 aa).

It belongs to the elongation factor P family.

The protein resides in the cytoplasm. It functions in the pathway protein biosynthesis; polypeptide chain elongation. Its function is as follows. Involved in peptide bond synthesis. Stimulates efficient translation and peptide-bond synthesis on native or reconstituted 70S ribosomes in vitro. Probably functions indirectly by altering the affinity of the ribosome for aminoacyl-tRNA, thus increasing their reactivity as acceptors for peptidyl transferase. This is Elongation factor P from Streptomyces avermitilis (strain ATCC 31267 / DSM 46492 / JCM 5070 / NBRC 14893 / NCIMB 12804 / NRRL 8165 / MA-4680).